Reading from the N-terminus, the 92-residue chain is Putative phosphotransferase enzyme IIB component BB_0367 (92 aa).

The 83-residue stretch at 10–92 (IKVAEHIVEC…ILYMMNEQKQ (83 aa)) folds into the PTS EIIB type-1 domain.

The protein resides in the cytoplasm. The phosphoenolpyruvate-dependent sugar phosphotransferase system (PTS), a major carbohydrate active -transport system, catalyzes the phosphorylation of incoming sugar substrates concomitant with their translocation across the cell membrane. The sequence is that of Putative phosphotransferase enzyme IIB component BB_0367 from Borreliella burgdorferi (strain ATCC 35210 / DSM 4680 / CIP 102532 / B31) (Borrelia burgdorferi).